The sequence spans 447 residues: Probable glycine dehydrogenase (decarboxylating) subunit 1 (447 aa).

It belongs to the GcvP family. N-terminal subunit subfamily. In terms of assembly, the glycine cleavage system is composed of four proteins: P, T, L and H. In this organism, the P 'protein' is a heterodimer of two subunits.

It catalyses the reaction N(6)-[(R)-lipoyl]-L-lysyl-[glycine-cleavage complex H protein] + glycine + H(+) = N(6)-[(R)-S(8)-aminomethyldihydrolipoyl]-L-lysyl-[glycine-cleavage complex H protein] + CO2. Its function is as follows. The glycine cleavage system catalyzes the degradation of glycine. The P protein binds the alpha-amino group of glycine through its pyridoxal phosphate cofactor; CO(2) is released and the remaining methylamine moiety is then transferred to the lipoamide cofactor of the H protein. This chain is Probable glycine dehydrogenase (decarboxylating) subunit 1, found in Azorhizobium caulinodans (strain ATCC 43989 / DSM 5975 / JCM 20966 / LMG 6465 / NBRC 14845 / NCIMB 13405 / ORS 571).